The primary structure comprises 516 residues: Anaerobic nitric oxide reductase transcription regulator NorR (516 aa).

Position 57 is a 4-aspartylphosphate (aspartate 57). The 230-residue stretch at 187 to 416 folds into the Sigma-54 factor interaction domain; the sequence is IIGLSAPMLQ…LEHAIHRAVV (230 aa). ATP-binding positions include 215-222 and 278-287; these read GETGTGKE and ADNGTLFLDE. Positions 482–501 form a DNA-binding region, H-T-H motif; that stretch reads WAATARALELDVANLHRLAK.

It participates in nitrogen metabolism; nitric oxide reduction. Functionally, required for the expression of anaerobic nitric oxide (NO) reductase, acts as a transcriptional activator for at least the norVW operon. Activation also requires sigma-54. This chain is Anaerobic nitric oxide reductase transcription regulator NorR, found in Klebsiella pneumoniae (strain 342).